Consider the following 420-residue polypeptide: MEDSESSTQAPAAHHGISLASSPVRALIRMRRKIRTLKKSRLQLDLTTGRPLDSAKASLRRQISTDRASLFKTTTYEKQQYFNFDTPTLEKLALNNQIRKKNRKKSRHVLYPGNVRKCLPVEQKSKAKRCLLLFIAIVCFQIFNAIENLDDNLQKYDLDGLEKTLQREVFGQRRAIDKLMDHLKDYLATHYHNKPLVLSFNGPSGVGKSHTGRLLAKHFRSVMDNDFVLQYYTMHNCPDENDVAKCQAEVSGMISEMISRAEIEEKIPVFIFDELEVMPVALLDVLHGYFQLNQSNEYLNAVYILISNIGGNEITKFVLQNSSKDFVNVPQELRHLVLTSLRKQHFLWDVAEIVPFTLLEKRHILDCFLDELLREGLYPDHSNIESLAGQLRYYTKENKEYSITGCKQVVAKVNLLQPYT.

The chain crosses the membrane as a helical span at residues 130–150 (CLLLFIAIVCFQIFNAIENLD). 202-209 (GPSGVGKS) contributes to the ATP binding site.

This sequence belongs to the ClpA/ClpB family. Torsin subfamily.

Its subcellular location is the membrane. The polypeptide is Torsin-4A (tor4a) (Xenopus tropicalis (Western clawed frog)).